A 451-amino-acid chain; its full sequence is Adenylosuccinate synthetase isozyme 2 (451 aa).

GTP contacts are provided by residues 34 to 40 and 62 to 64; these read GDEGKGK and GHT. The Proton acceptor role is filled by D35. The Mg(2+) site is built by D35 and G62. D35 provides a ligand contact to substrate. IMP contacts are provided by residues 35–38, 60–63, T157, R171, N250, T265, and R329; these read DEGK and NAGH. Catalysis depends on H63, which acts as the Proton donor. 325-331 lines the substrate pocket; the sequence is VTTGRKR. Residues R331, 357–359, and 439–442 each bind GTP; these read KLD and GVGK.

Belongs to the adenylosuccinate synthetase family. As to quaternary structure, homodimer. Mg(2+) is required as a cofactor.

The protein localises to the cytoplasm. Its subcellular location is the mitochondrion. The enzyme catalyses IMP + L-aspartate + GTP = N(6)-(1,2-dicarboxyethyl)-AMP + GDP + phosphate + 2 H(+). The protein operates within purine metabolism; AMP biosynthesis via de novo pathway; AMP from IMP: step 1/2. With respect to regulation, inhibited competitively by AMP and IMP and non-competitively by fructose 1,6-bisphosphate. Plays an important role in the de novo pathway and in the salvage pathway of purine nucleotide biosynthesis. Catalyzes the first committed step in the biosynthesis of AMP from IMP. In Gallus gallus (Chicken), this protein is Adenylosuccinate synthetase isozyme 2.